Reading from the N-terminus, the 109-residue chain is N-alpha-acetyltransferase 38, NatC auxiliary subunit (109 aa).

Positions 23–101 (LARCKLENLL…VVSIEVETES (79 aa)) constitute a Sm domain.

This sequence belongs to the snRNP Sm proteins family. Component of the N-terminal acetyltransferase C (NatC) complex.

It localises to the cytoplasm. It is found in the nucleus. Its function is as follows. Auxillary component of the N-terminal acetyltransferase C (NatC) complex which catalyzes acetylation of N-terminal methionine residues. N-terminal acetylation protects proteins from ubiquitination and degradation by the N-end rule pathway. The polypeptide is N-alpha-acetyltransferase 38, NatC auxiliary subunit (naa38) (Danio rerio (Zebrafish)).